Here is a 137-residue protein sequence, read N- to C-terminus: ATP synthase epsilon chain, chloroplastic (137 aa).

This sequence belongs to the ATPase epsilon chain family. F-type ATPases have 2 components, CF(1) - the catalytic core - and CF(0) - the membrane proton channel. CF(1) has five subunits: alpha(3), beta(3), gamma(1), delta(1), epsilon(1). CF(0) has three main subunits: a, b and c.

It localises to the plastid. The protein localises to the chloroplast thylakoid membrane. Its function is as follows. Produces ATP from ADP in the presence of a proton gradient across the membrane. This Agrostis stolonifera (Creeping bentgrass) protein is ATP synthase epsilon chain, chloroplastic.